The chain runs to 510 residues: Inositol-3-phosphate synthase (510 aa).

The NAD(+) site is built by Gly70, Gly71, Asn72, Asn73, Asp143, Ile180, Gln190, Arg193, Thr230, Ala231, Asn232, Thr233, Gly281, Ser282, Asp306, Ser309, Asn340, Asn341, Asp342, Lys355, Gly393, Asp394, Asp422, and Ser423.

The protein belongs to the myo-inositol 1-phosphate synthase family. NAD(+) is required as a cofactor.

The protein resides in the cytoplasm. The protein localises to the cytosol. It localises to the nucleus. It catalyses the reaction D-glucose 6-phosphate = 1D-myo-inositol 3-phosphate. It participates in polyol metabolism; myo-inositol biosynthesis; myo-inositol from D-glucose 6-phosphate: step 1/2. In terms of biological role, key enzyme in myo-inositol biosynthesis pathway that catalyzes the conversion of glucose 6-phosphate to 1-myo-inositol 1-phosphate in a NAD-dependent manner. This Nicotiana tabacum (Common tobacco) protein is Inositol-3-phosphate synthase.